The sequence spans 134 residues: MRMLLHLSLLALGASYMYAIPTEIPTSALVKETLTLLSTHRTLLIGNETLRIPVPVHKHHQLCTEEIFQGIGTLESQTLQGGTVERLFKNLSLIKKYIDGQKKKCGEERRRVNQFLDYLQEFLGVMNTEWIIES.

The N-terminal stretch at 1–19 (MRMLLHLSLLALGASYMYA) is a signal peptide. Residue T22 is glycosylated (O-linked (GalNAc...) threonine). N-linked (GlcNAc...) asparagine glycans are attached at residues N47 and N90.

The protein belongs to the IL-5 family. In terms of assembly, homodimer; disulfide-linked. Interacts with IL5RA. Interacts with CSF2RB.

It localises to the secreted. In terms of biological role, homodimeric cytokine expressed predominantly by T-lymphocytes and NK cells that plays an important role in the survival, differentiation, and chemotaxis of eosinophils. Also acts on activated and resting B-cells to induce immunoglobulin production, growth, and differentiation. Mechanistically, exerts its biological effects through a receptor composed of IL5RA subunit and the cytokine receptor common subunit beta/CSF2RB. Binding to the receptor leads to activation of various kinases including LYN, SYK and JAK2 and thereby propagates signals through the RAS-MAPK and JAK-STAT5 pathways respectively. This chain is Interleukin-5 (IL5), found in Cercocebus atys (Sooty mangabey).